A 500-amino-acid polypeptide reads, in one-letter code: Oogenesin-3 (500 aa).

An LRR 1; degenerate repeat occupies 116–143 (RCKLRVLKWRDEQHDFCGIWPGSHEAED). The LRR 2; degenerate repeat unit spans residues 198 to 222 (HLLCRKLVIETLTKDTVIEIFKIVN). An LRR 3; degenerate repeat occupies 223-248 (ADCIQELELYSLCLEDLAFLNPYLRQ). Residues 249 to 285 (MDNLLELTLDHVTDSLSMGDSEMCEEEMITLVSQLPT) form an LRR 4; degenerate repeat. LRR repeat units lie at residues 286-311 (FPCL…LRCL), 312-343 (KKPL…FELK), 344-367 (CLYL…LESV), 368-395 (RHTL…ALSQ), and 396-420 (CSHL…LLQH).

It belongs to the PRAME family. Expressed in ovary, specifically in oocytes. Detected in follicles with two layers of granulosa cells, and are present in early as well as large antral follicles.

This is Oogenesin-3 from Mus musculus (Mouse).